Consider the following 408-residue polypeptide: Neutral cholesterol ester hydrolase 1 (408 aa).

At 1–4 the chain is on the cytoplasmic side; sequence MRSS. A helical; Signal-anchor for type II membrane protein membrane pass occupies residues 5-25; it reads CVLLTALLALAAYYIYIPLPS. Residues 26–408 lie on the Lumenal side of the membrane; the sequence is SVSDPWKLML…SYIKWLDQNL (383 aa). An Involved in the stabilization of the negatively charged intermediate by the formation of the oxyanion hole motif is present at residues 113-115; sequence HGG. The active site involves serine 191. Residues asparagine 270 and asparagine 287 are each glycosylated (N-linked (GlcNAc...) asparagine). Residues aspartate 348 and histidine 378 contribute to the active site. N-linked (GlcNAc...) asparagine glycosylation is present at asparagine 389.

Belongs to the 'GDXG' lipolytic enzyme family. N-glycosylated.

The protein resides in the cell membrane. Its subcellular location is the microsome. The catalysed reaction is a 1-O-alkyl-2-acetyl-sn-glycerol + H2O = a 1-O-alkyl-sn-glycerol + acetate + H(+). It carries out the reaction 1-O-hexadecyl-2-acetyl-sn-glycerol + H2O = 1-O-hexadecyl-sn-glycerol + acetate + H(+). It catalyses the reaction a cholesterol ester + H2O = cholesterol + a fatty acid + H(+). The enzyme catalyses cholesteryl (9Z-octadecenoate) + H2O = cholesterol + (9Z)-octadecenoate + H(+). Its function is as follows. Hydrolyzes 2-acetyl monoalkylglycerol ether (1-O-alkyl-2-acetyl-sn-glycerol), the penultimate precursor of the pathway for de novo synthesis of platelet-activating factor. May be responsible for the hydrolysis of cholesterol esters (such as cholesteryl (9Z-octadecenoate)) in macrophages. Also involved in organ detoxification by hydrolyzing exogenous organophosphorus compounds. The chain is Neutral cholesterol ester hydrolase 1 (NCEH1) from Bos taurus (Bovine).